Here is a 224-residue protein sequence, read N- to C-terminus: Phosphoglycolate phosphatase (224 aa).

Residue Asp10 is the Nucleophile of the active site. Mg(2+)-binding residues include Asp10, Asp12, and Asp176.

The protein belongs to the HAD-like hydrolase superfamily. CbbY/CbbZ/Gph/YieH family. Requires Mg(2+) as cofactor.

It carries out the reaction 2-phosphoglycolate + H2O = glycolate + phosphate. It participates in organic acid metabolism; glycolate biosynthesis; glycolate from 2-phosphoglycolate: step 1/1. Functionally, specifically catalyzes the dephosphorylation of 2-phosphoglycolate. Is involved in the dissimilation of the intracellular 2-phosphoglycolate formed during the DNA repair of 3'-phosphoglycolate ends, a major class of DNA lesions induced by oxidative stress. The protein is Phosphoglycolate phosphatase of Pasteurella multocida (strain Pm70).